The primary structure comprises 229 residues: uncharacterized protein (229 aa).

22–29 (GMIAFGKT) is a binding site for ATP.

This is an uncharacterized protein from Mycoplasma pneumoniae (strain ATCC 29342 / M129 / Subtype 1) (Mycoplasmoides pneumoniae).